The primary structure comprises 510 residues: Pentatricopeptide repeat-containing protein At1g71060, mitochondrial (510 aa).

A mitochondrion-targeting transit peptide spans 1-14 (MVFSRFFRVTGVNL). 10 PPR repeats span residues 127-157 (TTSNYNALIESLGKIKQFKLIWSLVDDMKAK), 161-195 (SKETFALISRRYARARKVKEAIGAFHKMEEFGFKM), 196-230 (ESSDFNRMLDTLSKSRNVGDAQKVFDKMKKKRFEP), 231-265 (DIKSYTILLEGWGQELNLLRVDEVNREMKDEGFEP), 266-300 (DVVAYGIIINAHCKAKKYEEAIRFFNEMEQRNCKP), 301-335 (SPHIFCSLINGLGSEKKLNDALEFFERSKSSGFPL), 336-370 (EAPTYNALVGAYCWSQRMEDAYKTVDEMRLKGVGP), 371-401 (NARTYDIILHHLIRMQRSKEAYEVYQTMSCE), 403-437 (TVSTYEIMVRMFCNKERLDMAIKIWDEMKGKGVLP), and 438-472 (GMHMFSSLITALCHENKLDEACEYFNEMLDVGIRP).

It belongs to the PPR family. P subfamily.

It localises to the mitochondrion. The polypeptide is Pentatricopeptide repeat-containing protein At1g71060, mitochondrial (Arabidopsis thaliana (Mouse-ear cress)).